A 195-amino-acid chain; its full sequence is Imidazoleglycerol-phosphate dehydratase (195 aa).

It belongs to the imidazoleglycerol-phosphate dehydratase family.

Its subcellular location is the cytoplasm. The enzyme catalyses D-erythro-1-(imidazol-4-yl)glycerol 3-phosphate = 3-(imidazol-4-yl)-2-oxopropyl phosphate + H2O. It functions in the pathway amino-acid biosynthesis; L-histidine biosynthesis; L-histidine from 5-phospho-alpha-D-ribose 1-diphosphate: step 6/9. The sequence is that of Imidazoleglycerol-phosphate dehydratase from Azoarcus sp. (strain BH72).